We begin with the raw amino-acid sequence, 419 residues long: L-rhamnose isomerase (419 aa).

Mn(2+)-binding residues include histidine 262, aspartate 294, and aspartate 296.

It belongs to the rhamnose isomerase family. Homotetramer. Mn(2+) serves as cofactor.

The protein resides in the cytoplasm. The enzyme catalyses L-rhamnopyranose = L-rhamnulose. It participates in carbohydrate degradation; L-rhamnose degradation; glycerone phosphate from L-rhamnose: step 1/3. Catalyzes the interconversion of L-rhamnose and L-rhamnulose. The chain is L-rhamnose isomerase from Escherichia coli O7:K1 (strain IAI39 / ExPEC).